Here is a 232-residue protein sequence, read N- to C-terminus: Ubiquinone biosynthesis O-methyltransferase (232 aa).

Residues R36, G55, D76, and M120 each coordinate S-adenosyl-L-methionine.

It belongs to the methyltransferase superfamily. UbiG/COQ3 family.

The catalysed reaction is a 3-demethylubiquinol + S-adenosyl-L-methionine = a ubiquinol + S-adenosyl-L-homocysteine + H(+). The enzyme catalyses a 3-(all-trans-polyprenyl)benzene-1,2-diol + S-adenosyl-L-methionine = a 2-methoxy-6-(all-trans-polyprenyl)phenol + S-adenosyl-L-homocysteine + H(+). It functions in the pathway cofactor biosynthesis; ubiquinone biosynthesis. Functionally, O-methyltransferase that catalyzes the 2 O-methylation steps in the ubiquinone biosynthetic pathway. The chain is Ubiquinone biosynthesis O-methyltransferase from Paraburkholderia xenovorans (strain LB400).